We begin with the raw amino-acid sequence, 351 residues long: Fructose-1,6-bisphosphatase class 1 (351 aa).

4 residues coordinate Mg(2+): Glu-94, Asp-113, Leu-115, and Asp-116. Residues 116-119 and Asn-207 contribute to the substrate site; that span reads DGSS. Glu-279 contacts Mg(2+).

The protein belongs to the FBPase class 1 family. In terms of assembly, homotetramer. It depends on Mg(2+) as a cofactor.

It localises to the cytoplasm. It catalyses the reaction beta-D-fructose 1,6-bisphosphate + H2O = beta-D-fructose 6-phosphate + phosphate. Its pathway is carbohydrate biosynthesis; gluconeogenesis. The protein is Fructose-1,6-bisphosphatase class 1 of Methylobacterium radiotolerans (strain ATCC 27329 / DSM 1819 / JCM 2831 / NBRC 15690 / NCIMB 10815 / 0-1).